Reading from the N-terminus, the 115-residue chain is Non-specific lipid-transfer protein 3 (115 aa).

A signal peptide spans 1–23 (MAFALRFFTCLVLTVCIVASVDA). 4 disulfide bridges follow: Cys27–Cys74, Cys37–Cys51, Cys52–Cys97, and Cys72–Cys111.

The protein belongs to the plant LTP family.

Plant non-specific lipid-transfer proteins transfer phospholipids as well as galactolipids across membranes. May play a role in wax or cutin deposition in the cell walls of expanding epidermal cells and certain secretory tissues. The protein is Non-specific lipid-transfer protein 3 (LTP3) of Arabidopsis thaliana (Mouse-ear cress).